Here is a 282-residue protein sequence, read N- to C-terminus: uncharacterized protein (282 aa).

The stretch at 205 to 277 (LAQQRRVYAQ…DELQNKARDA (73 aa)) forms a coiled coil.

This is an uncharacterized protein from Treponema pallidum (strain Nichols).